A 326-amino-acid chain; its full sequence is tRNA-modifying protein YgfZ (326 aa).

Residues Trp-27 and Trp-189 each contribute to the folate site.

It belongs to the tRNA-modifying YgfZ family.

Its subcellular location is the cytoplasm. Folate-binding protein involved in regulating the level of ATP-DnaA and in the modification of some tRNAs. It is probably a key factor in regulatory networks that act via tRNA modification, such as initiation of chromosomal replication. The protein is tRNA-modifying protein YgfZ of Salmonella paratyphi A (strain AKU_12601).